The primary structure comprises 278 residues: MGWPWAPLTAVWALGVMGATALRIGAFNVQSFGDNKVSDPDCGSVIAQILAGYDIALVQEVRDPDLSAVSLLMEQINRVSKHEYGFVSSKPLGRDQYKEMYLFVYRKDVASVVSTYQYPDPEDAFSREPFVVKFSVPSCATKELVLIPLHAAPHQAVAEIDALYDVYLDVIDKWNTDDMLFLGDFNADCKYVKAHDWPSIRLRSSEVFKWLIPDSADTTVGNSDCAYDRIVVSGAHLRRSLKPHSASVHNFQEEFDLDQTQALAISDHFPVEVTFKTH.

An N-terminal signal peptide occupies residues 1 to 21; it reads MGWPWAPLTAVWALGVMGATA. Residues Glu99 and His150 contribute to the active site. Cys189 and Cys225 form a disulfide bridge.

It belongs to the DNase I family. It depends on Mg(2+) as a cofactor. The cofactor is Ca(2+).

It is found in the cytoplasm. The protein localises to the secreted. Functionally, divalent cation-dependent acid DNA endonuclease involved in the breakdown of the nucleus during corneocyte formation of epidermal keratinocytes. May play an immune role by eliminating harmful DNA released into the extracellular environment by damaged epidermal cells. In Mus musculus (Mouse), this protein is Deoxyribonuclease-1-like 2 (Dnase1l2).